Consider the following 284-residue polypeptide: Bifunctional protein FolD 2 (284 aa).

NADP(+) is bound by residues 165 to 167 (GRG), Thr192, and Val233.

This sequence belongs to the tetrahydrofolate dehydrogenase/cyclohydrolase family. In terms of assembly, homodimer.

The catalysed reaction is (6R)-5,10-methylene-5,6,7,8-tetrahydrofolate + NADP(+) = (6R)-5,10-methenyltetrahydrofolate + NADPH. It catalyses the reaction (6R)-5,10-methenyltetrahydrofolate + H2O = (6R)-10-formyltetrahydrofolate + H(+). It functions in the pathway one-carbon metabolism; tetrahydrofolate interconversion. Its function is as follows. Catalyzes the oxidation of 5,10-methylenetetrahydrofolate to 5,10-methenyltetrahydrofolate and then the hydrolysis of 5,10-methenyltetrahydrofolate to 10-formyltetrahydrofolate. This is Bifunctional protein FolD 2 from Streptomyces avermitilis (strain ATCC 31267 / DSM 46492 / JCM 5070 / NBRC 14893 / NCIMB 12804 / NRRL 8165 / MA-4680).